The sequence spans 341 residues: Very-long-chain 3-oxoacyl-CoA reductase (341 aa).

A helical transmembrane segment spans residues 17-37; that stretch reads ALYGALLLGVYKLTTFALSLV. NADP(+) is bound by residues V63, D117, N144, Y218, K222, V251, and S253. Y218 serves as the catalytic Proton donor. K222 functions as the Lowers pKa of active site Tyr in the catalytic mechanism.

Belongs to the short-chain dehydrogenases/reductases (SDR) family.

Its subcellular location is the endoplasmic reticulum membrane. The catalysed reaction is a very-long-chain (3R)-3-hydroxyacyl-CoA + NADP(+) = a very-long-chain 3-oxoacyl-CoA + NADPH + H(+). It participates in lipid metabolism; fatty acid biosynthesis. Its function is as follows. Component of the microsomal membrane bound fatty acid elongation system, which produces the 26-carbon very long-chain fatty acids (VLCFA) from palmitate. Catalyzes the reduction of the 3-ketoacyl-CoA intermediate that is formed in each cycle of fatty acid elongation. VLCFAs serve as precursors for ceramide and sphingolipids. The sequence is that of Very-long-chain 3-oxoacyl-CoA reductase from Meyerozyma guilliermondii (strain ATCC 6260 / CBS 566 / DSM 6381 / JCM 1539 / NBRC 10279 / NRRL Y-324) (Yeast).